A 620-amino-acid polypeptide reads, in one-letter code: MADALVGYEKEAGCVPILHPEEIKPQSHYNHGYNESRKSHVDDYSTWDIVKATQYGIFERCRELVEAGYDVRQPDKENVTLLHWAAINNRVDLVKYYISKGAIVDQLGGDLNSTPLHWATRQGHLSMVVQLMKYGADPSLIDGEGCSCVHLAAQFGHTSIVAYLIAKGQDVDMMDQNGMTPLMWAAYRTHSVDPTRLLLTFNVSVNLGDKYHKNTALHWAVLAGNTTVISLLLEANANVDAQNIKGETPLDLAKQRKNVWMINHLQEARQAKGYDSPSYLKRLKMDKEFRQKVMLGTPFLVIWLVGFIADLDIDSWLIKGVMYAVMWLVVQFLSKSFFDHSMHSALPLGIYLATKFWMYITWFYWFWNDLPFVTIHLPFLLNSLALFYNFGKSWKSDPGIIKASEEQKKKTIVELAETGSLDLSIFCSTCLIRKPIRSKHCAVCNRCIAKFDHHCPWVGNCVGSGNHRYFMGYLFFLLCMICWMMYGCICYWRIHCATSYTKDGFWIYITQIATCSPWMFWMFLNSVFHFMWVAVLIMCQLYQIAVLGITTNERMNARRYKHFKVTATSIESPFNHGCMRNLIDFFELRCCGLLRPVPIDWTSQYTIEYDQTSGSGYQLV.

The Cytoplasmic segment spans residues 1 to 292 (MADALVGYEK…LKMDKEFRQK (292 aa)). ANK repeat units lie at residues 77–106 (ENVT…IVDQ), 111–140 (LNST…DPSL), 144–173 (EGCS…DVDM), 177–207 (NGMT…SVNL), 212–241 (HKNT…NVDA), and 245–274 (KGET…AKGY). 2 consecutive transmembrane segments (helical) span residues 293–313 (VMLG…DLDI) and 314–334 (DSWL…QFLS). Topologically, residues 335–345 (KSFFDHSMHSA) are cytoplasmic. Residues 346–366 (LPLGIYLATKFWMYITWFYWF) traverse the membrane as a helical segment. Topologically, residues 367 to 369 (WND) are lumenal. A helical membrane pass occupies residues 370–390 (LPFVTIHLPFLLNSLALFYNF). Residues 391–469 (GKSWKSDPGI…NCVGSGNHRY (79 aa)) are Cytoplasmic-facing. Positions 425-475 (IFCSTCLIRKPIRSKHCAVCNRCIAKFDHHCPWVGNCVGSGNHRYFMGYLF) constitute a DHHC domain. The active-site S-palmitoyl cysteine intermediate is the cysteine 455. A helical transmembrane segment spans residues 470–490 (FMGYLFFLLCMICWMMYGCIC). Over 491–504 (YWRIHCATSYTKDG) the chain is Lumenal. A helical membrane pass occupies residues 505–524 (FWIYITQIATCSPWMFWMFL). At 525–620 (NSVFHFMWVA…QTSGSGYQLV (96 aa)) the chain is on the cytoplasmic side.

It belongs to the DHHC palmitoyltransferase family. AKR/ZDHHC17 subfamily. Autopalmitoylated.

It localises to the golgi apparatus membrane. Its subcellular location is the cytoplasmic vesicle membrane. The protein resides in the presynaptic cell membrane. It catalyses the reaction L-cysteinyl-[protein] + hexadecanoyl-CoA = S-hexadecanoyl-L-cysteinyl-[protein] + CoA. The enzyme catalyses L-cysteinyl-[protein] + tetradecanoyl-CoA = S-tetradecanoyl-L-cysteinyl-[protein] + CoA. It carries out the reaction L-cysteinyl-[protein] + octadecanoyl-CoA = S-octadecanoyl-L-cysteinyl-[protein] + CoA. In terms of biological role, palmitoyltransferase that catalyzes the addition of palmitate onto various protein substrates and is involved in a variety of cellular processes. Has no stringent fatty acid selectivity and in addition to palmitate can also transfer onto target proteins myristate from tetradecanoyl-CoA and stearate from octadecanoyl-CoA. Plays a role in axonogenesis. In Danio rerio (Zebrafish), this protein is Palmitoyltransferase ZDHHC17.